Reading from the N-terminus, the 342-residue chain is Succinylglutamate desuccinylase (342 aa).

The Zn(2+) site is built by H63, E66, and H155. E219 is an active-site residue.

The protein belongs to the AspA/AstE family. Succinylglutamate desuccinylase subfamily. It depends on Zn(2+) as a cofactor.

It catalyses the reaction N-succinyl-L-glutamate + H2O = L-glutamate + succinate. Its pathway is amino-acid degradation; L-arginine degradation via AST pathway; L-glutamate and succinate from L-arginine: step 5/5. Its function is as follows. Transforms N(2)-succinylglutamate into succinate and glutamate. The polypeptide is Succinylglutamate desuccinylase (Vibrio cholerae serotype O1 (strain ATCC 39541 / Classical Ogawa 395 / O395)).